The chain runs to 649 residues: Endoglucanase D (649 aa).

A signal peptide spans Met1–Ala41. The active-site Nucleophile is Asp201. Catalysis depends on residues His516 and Asp546. Glu555 (proton donor) is an active-site residue. Residues Asn579 to Ile649 form the Dockerin domain.

Belongs to the glycosyl hydrolase 9 (cellulase E) family. Ca(2+) is required as a cofactor.

It carries out the reaction Endohydrolysis of (1-&gt;4)-beta-D-glucosidic linkages in cellulose, lichenin and cereal beta-D-glucans.. This enzyme catalyzes the endohydrolysis of 1,4-beta-glucosidic linkages in cellulose, lichenin and cereal beta-D-glucans. The polypeptide is Endoglucanase D (celD) (Acetivibrio thermocellus (strain ATCC 27405 / DSM 1237 / JCM 9322 / NBRC 103400 / NCIMB 10682 / NRRL B-4536 / VPI 7372) (Clostridium thermocellum)).